A 215-amino-acid chain; its full sequence is Octanoyltransferase (215 aa).

The BPL/LPL catalytic domain maps to 31 to 206; it reads PDSQDEIWLV…QLVKHLDYAE (176 aa). Substrate contacts are provided by residues 70 to 77, 137 to 139, and 150 to 152; these read RGGQVTYH, SLG, and GLA. The Acyl-thioester intermediate role is filled by cysteine 168.

Belongs to the LipB family.

It is found in the cytoplasm. The catalysed reaction is octanoyl-[ACP] + L-lysyl-[protein] = N(6)-octanoyl-L-lysyl-[protein] + holo-[ACP] + H(+). Its pathway is protein modification; protein lipoylation via endogenous pathway; protein N(6)-(lipoyl)lysine from octanoyl-[acyl-carrier-protein]: step 1/2. Its function is as follows. Catalyzes the transfer of endogenously produced octanoic acid from octanoyl-acyl-carrier-protein onto the lipoyl domains of lipoate-dependent enzymes. Lipoyl-ACP can also act as a substrate although octanoyl-ACP is likely to be the physiological substrate. The sequence is that of Octanoyltransferase from Pseudomonas putida (strain ATCC 700007 / DSM 6899 / JCM 31910 / BCRC 17059 / LMG 24140 / F1).